The sequence spans 169 residues: MIYKKNFSKLSPITNLIRSALLNCRGMYITLRYMFKPKVTLNYPLEKGPLSTRFRGEHALRKYKNGEERCIACKLCEAICPAQAITIEAQERDDGSRRTVRYDIDMTKCIYCGFCQEACPVDAIVEGPNFEYATETREELMYNKSKLLHNGQIWEEAIDLRIKKNSQFY.

2 4Fe-4S ferredoxin-type domains span residues 61 to 90 (RKYK…IEAQ) and 100 to 129 (VRYD…EGPN). Residues cysteine 70, cysteine 73, cysteine 76, cysteine 80, cysteine 109, cysteine 112, cysteine 115, and cysteine 119 each contribute to the [4Fe-4S] cluster site.

This sequence belongs to the complex I 23 kDa subunit family. In terms of assembly, NDH-1 is composed of 14 different subunits. Subunits NuoA, H, J, K, L, M, N constitute the membrane sector of the complex. [4Fe-4S] cluster serves as cofactor.

The protein resides in the cell inner membrane. The enzyme catalyses a quinone + NADH + 5 H(+)(in) = a quinol + NAD(+) + 4 H(+)(out). NDH-1 shuttles electrons from NADH, via FMN and iron-sulfur (Fe-S) centers, to quinones in the respiratory chain. The immediate electron acceptor for the enzyme in this species is believed to be ubiquinone. Couples the redox reaction to proton translocation (for every two electrons transferred, four hydrogen ions are translocated across the cytoplasmic membrane), and thus conserves the redox energy in a proton gradient. The protein is NADH-quinone oxidoreductase subunit I of Ehrlichia chaffeensis (strain ATCC CRL-10679 / Arkansas).